Reading from the N-terminus, the 404-residue chain is Lysophospholipid transporter LplT (404 aa).

12 consecutive transmembrane segments (helical) span residues 16 to 36, 53 to 73, 91 to 111, 139 to 159, 164 to 184, 195 to 213, 227 to 247, 253 to 273, 285 to 305, 310 to 330, 350 to 370, and 372 to 392; these read MIAV…LLFA, ILQM…GQFA, AGAL…LVGV, MMEA…GVLA, GVAL…NMFI, SWRP…LVLW, LFWG…PIAL, ATPT…AGAA, CLPA…QHSM, LLLI…NALL, GENT…KLGV, and VIAV…LLWG.

Belongs to the major facilitator superfamily. LplT (TC 2.A.1.42) family.

The protein resides in the cell inner membrane. Catalyzes the facilitated diffusion of 2-acyl-glycero-3-phosphoethanolamine (2-acyl-GPE) into the cell. The sequence is that of Lysophospholipid transporter LplT from Yersinia enterocolitica serotype O:8 / biotype 1B (strain NCTC 13174 / 8081).